The sequence spans 929 residues: SED5-binding protein 3 (929 aa).

Residue Ser-15 is modified to Phosphoserine. Residues 18–28 (ESTVHTGGASS) show a composition bias toward polar residues. Residues 18-52 (ESTVHTGGASSKKSRRPHRAYHNFSSGTVPTLGNS) are disordered. Basic residues predominate over residues 29–38 (KKSRRPHRAY). The segment covering 40-52 (NFSSGTVPTLGNS) has biased composition (polar residues). Thr-72 is modified (phosphothreonine). Residues Ser-83, Ser-85, Ser-94, Ser-101, and Ser-110 each carry the phosphoserine modification. Phosphothreonine is present on Thr-216. The segment at 220–244 (CRRCRAYANPKFQFTYDSSVICNIC) is zinc finger-like.

The protein belongs to the SEC23/SEC24 family. SEC24 subfamily. As to quaternary structure, COPII is composed of at least five proteins: the SEC23/24 complex, the SEC13/31 complex and SAR1. Binds to SED5. Interacts with GHR1.

The protein localises to the cytoplasm. It is found in the golgi apparatus membrane. Its subcellular location is the endoplasmic reticulum membrane. In terms of biological role, component of the COPII coat, that covers ER-derived vesicles involved in transport from the endoplasmic reticulum to the Golgi apparatus. COPII acts in the cytoplasm to promote the transport of secretory, plasma membrane, and vacuolar proteins from the endoplasmic reticulum to the Golgi complex. This is SED5-binding protein 3 (SFB3) from Saccharomyces cerevisiae (strain ATCC 204508 / S288c) (Baker's yeast).